A 135-amino-acid polypeptide reads, in one-letter code: ATP synthase epsilon chain, chloroplastic (135 aa).

It belongs to the ATPase epsilon chain family. As to quaternary structure, F-type ATPases have 2 components, CF(1) - the catalytic core - and CF(0) - the membrane proton channel. CF(1) has five subunits: alpha(3), beta(3), gamma(1), delta(1), epsilon(1). CF(0) has three main subunits: a, b and c.

Its subcellular location is the plastid. The protein localises to the chloroplast thylakoid membrane. Functionally, produces ATP from ADP in the presence of a proton gradient across the membrane. The sequence is that of ATP synthase epsilon chain, chloroplastic from Marchantia polymorpha (Common liverwort).